We begin with the raw amino-acid sequence, 359 residues long: tRNA N6-adenosine threonylcarbamoyltransferase (359 aa).

Residues H115 and H119 each contribute to the Fe cation site. Substrate-binding positions include 137–141, D170, G183, and N283; that span reads LVSGG. Position 311 (D311) interacts with Fe cation. Positions 328–359 are disordered; it reads APDSLDIAPRSRWPLDEKSAPVFGTGRRGAKA.

Belongs to the KAE1 / TsaD family. Fe(2+) is required as a cofactor.

It localises to the cytoplasm. The catalysed reaction is L-threonylcarbamoyladenylate + adenosine(37) in tRNA = N(6)-L-threonylcarbamoyladenosine(37) in tRNA + AMP + H(+). Functionally, required for the formation of a threonylcarbamoyl group on adenosine at position 37 (t(6)A37) in tRNAs that read codons beginning with adenine. Is involved in the transfer of the threonylcarbamoyl moiety of threonylcarbamoyl-AMP (TC-AMP) to the N6 group of A37, together with TsaE and TsaB. TsaD likely plays a direct catalytic role in this reaction. The chain is tRNA N6-adenosine threonylcarbamoyltransferase from Brucella abortus (strain S19).